The sequence spans 435 residues: Serine hydroxymethyltransferase 2 (435 aa).

Residues Leu135 and 139–141 (GHL) each bind (6S)-5,6,7,8-tetrahydrofolate. Position 244 is an N6-(pyridoxal phosphate)lysine (Lys244). Residue Glu260 participates in (6S)-5,6,7,8-tetrahydrofolate binding.

It belongs to the SHMT family. As to quaternary structure, homodimer. The cofactor is pyridoxal 5'-phosphate.

The protein resides in the cytoplasm. It catalyses the reaction (6R)-5,10-methylene-5,6,7,8-tetrahydrofolate + glycine + H2O = (6S)-5,6,7,8-tetrahydrofolate + L-serine. It functions in the pathway one-carbon metabolism; tetrahydrofolate interconversion. Its pathway is amino-acid biosynthesis; glycine biosynthesis; glycine from L-serine: step 1/1. Catalyzes the reversible interconversion of serine and glycine with tetrahydrofolate (THF) serving as the one-carbon carrier. This reaction serves as the major source of one-carbon groups required for the biosynthesis of purines, thymidylate, methionine, and other important biomolecules. Also exhibits THF-independent aldolase activity toward beta-hydroxyamino acids, producing glycine and aldehydes, via a retro-aldol mechanism. This chain is Serine hydroxymethyltransferase 2, found in Vibrio cholerae serotype O1 (strain ATCC 39315 / El Tor Inaba N16961).